The chain runs to 158 residues: MAAPGPNKDNIRAGCKRCGYPGHLTFECRNFLRVDPRKDIVLDVSSTSTEESDEEEQEALSKEKIFGSHSKGSQEDSRKEKHKKKSKERSRGKAKKRSYSSSDEEEDEMSKKKKKRKSNKKKGKKEKREKERKHKKKQKKKDTESSSSDSSSESSDTD.

Disordered regions lie at residues 1-20 (MAAP…RCGY) and 45-158 (SSTS…SDTD). Residues 13-30 (AGCKRCGYPGHLTFECRN) form a CCHC-type zinc finger. Residues 59–79 (ALSKEKIFGSHSKGSQEDSRK) are compositionally biased toward basic and acidic residues. 2 stretches are compositionally biased toward basic residues: residues 80–98 (EKHK…KKRS) and 111–140 (KKKK…KQKK). Over residues 145 to 158 (SSSSDSSSESSDTD) the composition is skewed to low complexity.

Its function is as follows. Possible splicing regulator involved in the control of cellular survival. This Danio rerio (Zebrafish) protein is Protein SREK1IP1 (srek1ip1).